A 483-amino-acid chain; its full sequence is UDP-N-acetylmuramoyl-L-alanyl-D-glutamate--2,6-diaminopimelate ligase (483 aa).

A UDP-N-acetyl-alpha-D-muramoyl-L-alanyl-D-glutamate-binding site is contributed by serine 30. 109–115 is an ATP binding site; sequence GTNGKTT. Residues 151–152, serine 178, and arginine 186 each bind UDP-N-acetyl-alpha-D-muramoyl-L-alanyl-D-glutamate; that span reads TT. Lysine 218 carries the N6-carboxylysine modification. Residues arginine 380, 403–406, glycine 453, and glutamate 457 contribute to the meso-2,6-diaminopimelate site; that span reads DNPR. Residues 403-406 carry the Meso-diaminopimelate recognition motif motif; the sequence is DNPR.

The protein belongs to the MurCDEF family. MurE subfamily. Mg(2+) is required as a cofactor. In terms of processing, carboxylation is probably crucial for Mg(2+) binding and, consequently, for the gamma-phosphate positioning of ATP.

The protein resides in the cytoplasm. The enzyme catalyses UDP-N-acetyl-alpha-D-muramoyl-L-alanyl-D-glutamate + meso-2,6-diaminopimelate + ATP = UDP-N-acetyl-alpha-D-muramoyl-L-alanyl-gamma-D-glutamyl-meso-2,6-diaminopimelate + ADP + phosphate + H(+). It participates in cell wall biogenesis; peptidoglycan biosynthesis. Its function is as follows. Catalyzes the addition of meso-diaminopimelic acid to the nucleotide precursor UDP-N-acetylmuramoyl-L-alanyl-D-glutamate (UMAG) in the biosynthesis of bacterial cell-wall peptidoglycan. In Chlamydia trachomatis serovar A (strain ATCC VR-571B / DSM 19440 / HAR-13), this protein is UDP-N-acetylmuramoyl-L-alanyl-D-glutamate--2,6-diaminopimelate ligase.